A 390-amino-acid polypeptide reads, in one-letter code: METFLFTSESVNEGHPDKLCDQVSDAILDACLEQDPESKVACETCTKTSMVMVFGEITTKATVDYEKIVRDTCRGIGFTSADVGLDADHCKVLVNIEQQSPDIAQGVHGHLTKKPEEIGAGDQGHMFGYATDETPELMPLTHVLATKLGAKLTEVRKNKTCPWLRPDGKTQVTVEYRNDNGAMIPLRVHTILISTQHDETVTNDQIAQDLKEHVIKPVVPAEYLDENTIFHLNPSGRFVIGGPHGDAGLTGRKIIIDTYGGWGAHGGGAFSGKDPTKVDRSGAYIVRQAAKSVVASGLARRCIVQVSYAIGVAEPLSVFVDTYKTGTIPGKDVLTLIKENFDFRPGMMSINLDLLRGGNFRYQKTAAYGHFGRDDPDFTWETVKVLNPQA.

Residue Glu-9 coordinates Mg(2+). His-15 serves as a coordination point for ATP. Glu-43 provides a ligand contact to K(+). L-methionine is bound by residues Glu-56 and Gln-99. ATP-binding positions include 167–169, 235–238, Asp-246, 252–253, Ala-269, Lys-273, and Lys-277; these read DGK, SGRF, and RK. Asp-246 lines the L-methionine pocket. Lys-277 contributes to the L-methionine binding site.

This sequence belongs to the AdoMet synthase family. Homotetramer. It depends on Mn(2+) as a cofactor. Requires Mg(2+) as cofactor. Co(2+) is required as a cofactor. K(+) serves as cofactor.

The protein resides in the cytoplasm. It carries out the reaction L-methionine + ATP + H2O = S-adenosyl-L-methionine + phosphate + diphosphate. The protein operates within amino-acid biosynthesis; S-adenosyl-L-methionine biosynthesis; S-adenosyl-L-methionine from L-methionine: step 1/1. Functionally, catalyzes the formation of S-adenosylmethionine from methionine and ATP. The reaction comprises two steps that are both catalyzed by the same enzyme: formation of S-adenosylmethionine (AdoMet) and triphosphate, and subsequent hydrolysis of the triphosphate. The sequence is that of S-adenosylmethionine synthase 2 (SAM2) from Petunia hybrida (Petunia).